A 317-amino-acid polypeptide reads, in one-letter code: Ribosomal RNA small subunit methyltransferase H (317 aa).

Residues 39-41 (GGH), Asp-59, Phe-83, Asp-104, and Gln-111 each bind S-adenosyl-L-methionine.

The protein belongs to the methyltransferase superfamily. RsmH family.

Its subcellular location is the cytoplasm. It catalyses the reaction cytidine(1402) in 16S rRNA + S-adenosyl-L-methionine = N(4)-methylcytidine(1402) in 16S rRNA + S-adenosyl-L-homocysteine + H(+). Its function is as follows. Specifically methylates the N4 position of cytidine in position 1402 (C1402) of 16S rRNA. The sequence is that of Ribosomal RNA small subunit methyltransferase H from Paraburkholderia phymatum (strain DSM 17167 / CIP 108236 / LMG 21445 / STM815) (Burkholderia phymatum).